A 345-amino-acid polypeptide reads, in one-letter code: Probable 1-aminocyclopropane-1-carboxylate deaminase (345 aa).

Lys58 is modified (N6-(pyridoxal phosphate)lysine). Ser85 acts as the Nucleophile in catalysis.

It belongs to the ACC deaminase/D-cysteine desulfhydrase family. Pyridoxal 5'-phosphate serves as cofactor.

The catalysed reaction is 1-aminocyclopropane-1-carboxylate + H2O = 2-oxobutanoate + NH4(+). In terms of biological role, catalyzes a cyclopropane ring-opening reaction, the irreversible conversion of 1-aminocyclopropane-1-carboxylate (ACC) to ammonia and alpha-ketobutyrate. The polypeptide is Probable 1-aminocyclopropane-1-carboxylate deaminase (Cryptococcus neoformans var. neoformans serotype D (strain JEC21 / ATCC MYA-565) (Filobasidiella neoformans)).